The following is a 713-amino-acid chain: MRKSLSLFSIFILIFLGLVIPFITLTAFRPLNEEQYTLKQESSTGKGINETDFINTMFLRSSFFENWSETNYFINPTLKTSKNLLFNDKWYLDFLQDSYSTGVVYDKPNEVFLNYYQQWHSLKNRYMVEKFYDVKKENFLNDLIDFIYAFAVKYKMFNVSKEIVKNVDRYKENHYPRVKLNQDNWKLIDDIENVDKYKWEDETYIGITKIWKNKEWNWIIEDWKLHPPFSNVYLSSYKAIYRWTGVGKPQLPTIDKNTGEITDWNSYQQTRVKEFIDLSLYSVLLENTRVQQGGSADYENPNKVGTKRIIFDFETVDELDVKNIKKAIYRMILTVDEANLIISGSLELNNINNDDLSFNFSFMRTGMGEVFNFNGSIYSSLNSKDLKYYQQFSGQFDLSKFLQSFFASALVPVFQNRSSFIENGYIDNLQYDTVLVNFFALKLQNFNNILLSENINDKLQFDKLLNSMFKISQKFYTNYLRTIFDLENNTYVQGYNKKYGLLVNNGFKIYPRYFYFSDKYKQLDIKLYSAFKNRFYTINNYGSVFNYDFSVANNYNISLNSGYVFGGDLQNKYGLQYKKIEEQKIGYNVFELQAQKENDMYRYYDFNFGIYNWQEINNGGLFPDKQWWQVQYITPKGWWDFGAHIKNAVIWIVNTIPGVKQVNELASGVGKVFETVYSFFSQIFEVWKFNPALYSTITNIFLLIIFMKFVRLI.

A helical transmembrane segment spans residues 686-706 (VWKFNPALYSTITNIFLLIIF).

It belongs to the plectrovirus ORF1 family.

It is found in the host membrane. This is an uncharacterized protein from Spiroplasma melliferum (SpV1).